Here is a 189-residue protein sequence, read N- to C-terminus: GTP cyclohydrolase 1 (189 aa).

3 residues coordinate Zn(2+): Cys78, His81, and Cys150.

The protein belongs to the GTP cyclohydrolase I family. As to quaternary structure, toroid-shaped homodecamer, composed of two pentamers of five dimers.

The enzyme catalyses GTP + H2O = 7,8-dihydroneopterin 3'-triphosphate + formate + H(+). Its pathway is cofactor biosynthesis; 7,8-dihydroneopterin triphosphate biosynthesis; 7,8-dihydroneopterin triphosphate from GTP: step 1/1. This chain is GTP cyclohydrolase 1, found in Listeria innocua serovar 6a (strain ATCC BAA-680 / CLIP 11262).